Here is a 445-residue protein sequence, read N- to C-terminus: Allantoinase (445 aa).

Zn(2+)-binding residues include histidine 63, histidine 65, lysine 150, histidine 186, histidine 238, and aspartate 311. Lysine 150 carries the post-translational modification N6-carboxylysine.

It belongs to the metallo-dependent hydrolases superfamily. Allantoinase family. Homotetramer. Requires Zn(2+) as cofactor. Carboxylation allows a single lysine to coordinate two zinc ions.

It carries out the reaction (S)-allantoin + H2O = allantoate + H(+). Its pathway is nitrogen metabolism; (S)-allantoin degradation; allantoate from (S)-allantoin: step 1/1. Catalyzes the conversion of allantoin (5-ureidohydantoin) to allantoic acid by hydrolytic cleavage of the five-member hydantoin ring. This chain is Allantoinase, found in Streptomyces avermitilis (strain ATCC 31267 / DSM 46492 / JCM 5070 / NBRC 14893 / NCIMB 12804 / NRRL 8165 / MA-4680).